Consider the following 234-residue polypeptide: Interleukin-27 subunit alpha (234 aa).

The N-terminal stretch at 1–28 (MGQVTGDLGWRLSLLLLPLLLVQAGSWG) is a signal peptide. Asn85 carries an N-linked (GlcNAc...) asparagine glycan. The disordered stretch occupies residues 160 to 185 (KEEEDKEEEEEEEEEEKKLPLGALGG). A compositionally biased stretch (acidic residues) spans 161–174 (EEEDKEEEEEEEEE).

It belongs to the IL-6 superfamily. Heterodimer with EBI3; not disulfide-linked. This heterodimer is known as interleukin IL-27. In terms of processing, O-glycosylated. Expressed in macrophages and dendritic cells.

The protein localises to the secreted. In terms of biological role, associates with EBI3 to form the IL-27 interleukin, a heterodimeric cytokine which functions in innate immunity. IL-27 has pro- and anti-inflammatory properties, that can regulate T-helper cell development, suppress T-cell proliferation, stimulate cytotoxic T-cell activity, induce isotype switching in B-cells, and that has diverse effects on innate immune cells. Among its target cells are CD4 T-helper cells which can differentiate in type 1 effector cells (TH1), type 2 effector cells (TH2) and IL17 producing helper T-cells (TH17). It drives rapid clonal expansion of naive but not memory CD4 T-cells. It also strongly synergizes with IL-12 to trigger interferon-gamma/IFN-gamma production of naive CD4 T-cells, binds to the cytokine receptor WSX-1/TCCR which appears to be required but not sufficient for IL-27-mediated signal transduction. IL-27 potentiate the early phase of TH1 response and suppress TH2 and TH17 differentiation. It induces the differentiation of TH1 cells via two distinct pathways, p38 MAPK/TBX21- and ICAM1/ITGAL/ERK-dependent pathways. It also induces STAT1, STAT3, STAT4 and STAT5 phosphorylation and activates TBX21/T-Bet via STAT1 with resulting IL12RB2 up-regulation, an event crucial to TH1 cell commitment. It suppresses the expression of GATA3, the inhibitor TH1 cells development. In CD8 T-cells, it activates STATs as well as GZMB. IL-27 reveals to be a potent inhibitor of TH17 cell development and of IL-17 production. Indeed IL27 alone is also able to inhibit the production of IL17 by CD4 and CD8 T-cells. While IL-27 suppressed the development of pro-inflammatory Th17 cells via STAT1, it inhibits the development of anti-inflammatory inducible regulatory T-cells, iTreg, independently of STAT1. IL-27 also has an effect on cytokine production, it suppresses pro-inflammatory cytokine production such as IL2, IL4, IL5 and IL6 and activates suppressors of cytokine signaling such as SOCS1 and SOCS3. Apart from suppression of cytokine production, IL-27 also antagonizes the effects of some cytokines such as IL6 through direct effects on T-cells. Another important role of IL-27 is its antitumor activity as well as its antiangiogenic activity with activation of production of antiangiogenic chemokines such as IP-10/CXCL10 and MIG/CXCL9. The protein is Interleukin-27 subunit alpha (Il27) of Mus musculus (Mouse).